The primary structure comprises 176 residues: NAD(P)H-quinone oxidoreductase subunit 6, chloroplastic (176 aa).

Transmembrane regions (helical) follow at residues 10–30 (FLLV…VLLT), 32–52 (PIYS…FYIP), 61–81 (AQLL…VMFM), 93–115 (WTVG…ITTI), and 152–172 (FFLP…GAIA).

This sequence belongs to the complex I subunit 6 family. As to quaternary structure, NDH is composed of at least 16 different subunits, 5 of which are encoded in the nucleus.

The protein resides in the plastid. Its subcellular location is the chloroplast thylakoid membrane. It carries out the reaction a plastoquinone + NADH + (n+1) H(+)(in) = a plastoquinol + NAD(+) + n H(+)(out). The catalysed reaction is a plastoquinone + NADPH + (n+1) H(+)(in) = a plastoquinol + NADP(+) + n H(+)(out). In terms of biological role, NDH shuttles electrons from NAD(P)H:plastoquinone, via FMN and iron-sulfur (Fe-S) centers, to quinones in the photosynthetic chain and possibly in a chloroplast respiratory chain. The immediate electron acceptor for the enzyme in this species is believed to be plastoquinone. Couples the redox reaction to proton translocation, and thus conserves the redox energy in a proton gradient. The chain is NAD(P)H-quinone oxidoreductase subunit 6, chloroplastic (ndhG) from Vitis vinifera (Grape).